The chain runs to 349 residues: NADP-dependent alcohol dehydrogenase C 1 (349 aa).

Positions 41, 63, 94, 97, 100, 108, and 159 each coordinate Zn(2+). Lysine 210 is covalently cross-linked (Isoglutamyl lysine isopeptide (Lys-Gln) (interchain with Q-Cter in protein Pup)).

This sequence belongs to the zinc-containing alcohol dehydrogenase family. It depends on Zn(2+) as a cofactor.

The catalysed reaction is a primary alcohol + NADP(+) = an aldehyde + NADPH + H(+). Prefers aldehydes over alcohols. This chain is NADP-dependent alcohol dehydrogenase C 1 (adhc1), found in Mycolicibacterium smegmatis (strain ATCC 700084 / mc(2)155) (Mycobacterium smegmatis).